Reading from the N-terminus, the 496-residue chain is 6-phosphogluconate dehydrogenase, decarboxylating (496 aa).

Residues 13–18 (GLDVSI), 24–26 (DNV), 68–70 (ITH), and Asn-96 each bind NADP(+). Substrate-binding positions include Asn-96 and 122–124 (SGG). The active-site Proton acceptor is Lys-178. 181–182 (HN) lines the substrate pocket. Residue Glu-185 is the Proton donor of the active site. Substrate-binding residues include Arg-300 and His-468. The interval 476–496 (PGEDPGPVSKGPHHYEWRPAK) is disordered.

It belongs to the 6-phosphogluconate dehydrogenase family. As to quaternary structure, homodimer.

The protein localises to the cytoplasm. The catalysed reaction is 6-phospho-D-gluconate + NADP(+) = D-ribulose 5-phosphate + CO2 + NADPH. It participates in carbohydrate degradation; pentose phosphate pathway; D-ribulose 5-phosphate from D-glucose 6-phosphate (oxidative stage): step 3/3. Catalyzes the oxidative decarboxylation of 6-phosphogluconate to ribulose 5-phosphate and CO(2), with concomitant reduction of NADP to NADPH. The sequence is that of 6-phosphogluconate dehydrogenase, decarboxylating from Emericella nidulans (strain FGSC A4 / ATCC 38163 / CBS 112.46 / NRRL 194 / M139) (Aspergillus nidulans).